A 104-amino-acid chain; its full sequence is L-rhamnose mutarotase (104 aa).

Residue Tyr-18 participates in substrate binding. His-22 serves as the catalytic Proton donor. Substrate is bound by residues Tyr-41 and 76–77 (WW).

This sequence belongs to the rhamnose mutarotase family. Homodimer.

Its subcellular location is the cytoplasm. It catalyses the reaction alpha-L-rhamnose = beta-L-rhamnose. It functions in the pathway carbohydrate metabolism; L-rhamnose metabolism. Involved in the anomeric conversion of L-rhamnose. This is L-rhamnose mutarotase from Escherichia fergusonii (strain ATCC 35469 / DSM 13698 / CCUG 18766 / IAM 14443 / JCM 21226 / LMG 7866 / NBRC 102419 / NCTC 12128 / CDC 0568-73).